Reading from the N-terminus, the 473-residue chain is Glycosyl hydrolase family 109 protein 2 (473 aa).

The tat-type signal signal peptide spans 1–31; the sequence is MSIFSSRRQFLKSLGLAAGAAAAGNALPGKA. NAD(+) contacts are provided by residues 77–78, Asp99, 148–151, 168–169, and Asn197; these read GR, WSSH, and EV. Substrate-binding positions include Tyr226, Arg244, 256–259, and Tyr339; that span reads YPTH. Tyr256 contributes to the NAD(+) binding site.

Belongs to the Gfo/Idh/MocA family. Glycosyl hydrolase 109 subfamily. NAD(+) serves as cofactor. Post-translationally, predicted to be exported by the Tat system. The position of the signal peptide cleavage has not been experimentally proven.

In terms of biological role, glycosidase. This Akkermansia muciniphila (strain ATCC BAA-835 / DSM 22959 / JCM 33894 / BCRC 81048 / CCUG 64013 / CIP 107961 / Muc) protein is Glycosyl hydrolase family 109 protein 2.